The following is a 60-amino-acid chain: Large ribosomal subunit protein uL30 (60 aa).

It belongs to the universal ribosomal protein uL30 family. In terms of assembly, part of the 50S ribosomal subunit.

The chain is Large ribosomal subunit protein uL30 from Bacillus mycoides (strain KBAB4) (Bacillus weihenstephanensis).